A 733-amino-acid chain; its full sequence is Microtubule-associated protein tau (733 aa).

Over residues 1–16 the composition is skewed to basic and acidic residues; that stretch reads MADPRQEFDTMEDHAG. The interval 1–548 is disordered; that stretch reads MADPRQEFDT…PVPMPDLKNV (548 aa). Ala-2 carries the post-translational modification N-acetylalanine. Residue Tyr-18 is modified to Phosphotyrosine; by FYN. Lys-33 participates in a covalent cross-link: Glycyl lysine isopeptide (Lys-Gly) (interchain with G-Cter in ubiquitin). Phosphoserine is present on residues Ser-35 and Ser-50. The segment covering 50–60 has biased composition (polar residues); sequence SETSDAKSTPT. Thr-58, Thr-60, and Thr-100 each carry phosphothreonine. Arg-115 is modified (omega-N-methylarginine). A compositionally biased stretch (polar residues) spans 126-137; that stretch reads SDWTRQQVSSMS. The span at 157–172 shows a compositional bias: basic and acidic residues; sequence RPEDIEKSHPASELLR. A Phosphoserine modification is found at Ser-188. A compositionally biased stretch (acidic residues) spans 189–202; the sequence is EEEVDEDLTVDESS. Positions 203–212 are enriched in polar residues; the sequence is QDSPPSQASL. Basic and acidic residues-rich tracts occupy residues 270–294 and 354–366; these read EEGH…KEQD and ASKD…EKKA. Over residues 413–427 the composition is skewed to polar residues; that stretch reads KHVSSVTPRNGSPGT. Thr-445 is subject to Phosphothreonine. Arg-447 bears the Omega-N-methylarginine mark. Phosphoserine is present on Ser-451. Lys-455 carries the post-translational modification N6,N6-dimethyllysine; alternate. Position 455 is an N6-acetyllysine; alternate (Lys-455). Thr-461, Thr-467, and Thr-468 each carry phosphothreonine. Ser-470 carries the post-translational modification Phosphoserine. At Thr-473 the chain carries Phosphothreonine. Phosphoserine is present on residues Ser-477, Ser-483, and Ser-487. Low complexity predominate over residues 479–506; the sequence is EPPKSGERSGYSSPGSPGTPGSRSRTPS. Tyr-489 is subject to Phosphotyrosine. Phosphoserine is present on residues Ser-490, Ser-491, and Ser-494. Phosphothreonine is present on residues Thr-497 and Thr-504. Ser-506 is subject to Phosphoserine. A Phosphothreonine modification is found at Thr-509. Lys-517 carries the post-translational modification N6-acetyllysine. At Thr-523 the chain carries Phosphothreonine. A phosphoserine mark is found at Ser-527, Ser-529, and Ser-531. Tau/MAP repeat units follow at residues 536–566, 567–597, 598–628, and 629–660; these read QTAP…GGGK, VQII…GGGS, VQIV…GGGQ, and VEVK…GGGN. Lys-546 participates in a covalent cross-link: Glycyl lysine isopeptide (Lys-Gly) (interchain with G-Cter in ubiquitin). Lys-551 is subject to N6-acetyllysine; alternate. Lys-551 is subject to N6-methyllysine; alternate. A Glycyl lysine isopeptide (Lys-Gly) (interchain with G-Cter in ubiquitin); alternate cross-link involves residue Lys-551. Residue Ser-554 is modified to Phosphoserine; by MARK1, BRSK1, BRSK2 and PHK. Residue Lys-559 forms a Glycyl lysine isopeptide (Lys-Gly) (interchain with G-Cter in ubiquitin) linkage. Position 573 is an N6-acetyllysine; alternate (Lys-573). Lys-573 participates in a covalent cross-link: Glycyl lysine isopeptide (Lys-Gly) (interchain with G-Cter in ubiquitin); alternate. 2 positions are modified to phosphoserine: Ser-577 and Ser-581. An N6-acetyllysine modification is found at Lys-582. Cys-583 and Cys-614 are oxidised to a cystine. The residue at position 585 (Ser-585) is a Phosphoserine. Residue Lys-590 is modified to N6-acetyllysine; alternate. Residue Lys-590 forms a Glycyl lysine isopeptide (Lys-Gly) (interchain with G-Cter in ubiquitin); alternate linkage. Ser-597 carries the phosphoserine modification. At Lys-603 the chain carries N6,N6-dimethyllysine; alternate. An N6-acetyllysine; alternate mark is found at Lys-603, Lys-609, and Lys-613. Residues Lys-603, Lys-609, and Lys-613 each participate in a glycyl lysine isopeptide (Lys-Gly) (interchain with G-Cter in ubiquitin); alternate cross-link. At Ser-616 the chain carries Phosphoserine. N6-acetyllysine; alternate is present on residues Lys-623, Lys-635, and Lys-639. Glycyl lysine isopeptide (Lys-Gly) (interchain with G-Cter in ubiquitin); alternate cross-links involve residues Lys-623, Lys-635, and Lys-639. An Omega-N-methylarginine modification is found at Arg-641. Ser-644 carries the phosphoserine modification. Lys-645 participates in a covalent cross-link: Glycyl lysine isopeptide (Lys-Gly) (interchain with G-Cter in ubiquitin). Residue Ser-648 is modified to Phosphoserine. At Lys-661 the chain carries N6-acetyllysine; alternate. Lys-661 is covalently cross-linked (Glycyl lysine isopeptide (Lys-Gly) (interchain with G-Cter in ubiquitin); alternate). Residue Lys-667 forms a Glycyl lysine isopeptide (Lys-Gly) (interchain with G-Cter in ubiquitin) linkage. Lys-677 is subject to N6-acetyllysine; alternate. Lys-677 is covalently cross-linked (Glycyl lysine isopeptide (Lys-Gly) (interchain with G-Cter in ubiquitin); alternate). Position 686 is a phosphotyrosine (Tyr-686). Ser-688 is subject to Phosphoserine. The disordered stretch occupies residues 690-709; it reads VVSGDTSPRHLSNVSSTGSI. The residue at position 692 (Ser-692) is a Phosphoserine; alternate. Ser-692 carries O-linked (GlcNAc...) serine; alternate glycosylation. Positions 693–708 are enriched in polar residues; the sequence is GDTSPRHLSNVSSTGS. Thr-695 bears the Phosphothreonine mark. 4 positions are modified to phosphoserine: Ser-696, Ser-701, Ser-708, and Ser-714. Residue Thr-719 is modified to Phosphothreonine.

Interacts with MARK1, MARK2, MARK3 and MARK4. Interacts with SQSTM1 when polyubiquitinated. Interacts with PSMC2 through SQSTM1. Interacts with FKBP4. Binds to CSNK1D. Interacts with SGK1. Interacts with EPM2A; the interaction dephosphorylates MAPT at Ser-369. Interacts with PIN1. Interacts with LRRK2. Interacts with LRP1, leading to endocytosis; this interaction is reduced in the presence of LRPAP1/RAP. Polyubiquitinated. Requires functional TRAF6 and may provoke SQSTM1-dependent degradation by the proteasome. Post-translationally, phosphorylation at various serine and threonine residues in S-P or T-P motifs by proline-directed protein kinases (PDPK1, CDK1, CDK5, GSK3, MAPK) (a few sites per protein in interphase, more in mitosis), and at serine residues in K-X-G-S motifs by MAP/microtubule affinity-regulating kinase (MARK1, MARK2, MARK3, MARK4), causing detachment from microtubules, and their disassembly. Phosphorylated by PHK. Dephosphorylation at several serine and threonine residues by the serine/threonine phosphatase PPP5C. Phosphorylation at Ser-554 by BRSK1 and BRSK2 in neurons affects ability to bind microtubules and plays a role in neuron polarization. Phosphorylation at Ser-188 by SGK1 mediates microtubule depolymerization and neurite formation in hippocampal neurons. As to expression, expressed in neurons and at a lower level in the liver and kidney. Isoform PNS-tau is expressed in the peripheral nervous system while the others are expressed in the central nervous system.

The protein resides in the cytoplasm. The protein localises to the cytosol. It localises to the cell membrane. It is found in the cytoskeleton. Its subcellular location is the cell projection. The protein resides in the axon. The protein localises to the dendrite. It localises to the secreted. Its function is as follows. Promotes microtubule assembly and stability, and might be involved in the establishment and maintenance of neuronal polarity. The C-terminus binds axonal microtubules while the N-terminus binds neural plasma membrane components, suggesting that tau functions as a linker protein between both. Axonal polarity is predetermined by tau localization (in the neuronal cell) in the domain of the cell body defined by the centrosome. The short isoforms allow plasticity of the cytoskeleton whereas the longer isoforms may preferentially play a role in its stabilization. The protein is Microtubule-associated protein tau of Mus musculus (Mouse).